A 376-amino-acid chain; its full sequence is Endoplasmic reticulum-Golgi intermediate compartment protein 2 (376 aa).

At 1 to 33 (MRRLNKKKALNFVRELDAFPKVPESYVETTASG) the chain is on the cytoplasmic side. A helical transmembrane segment spans residues 34-54 (GTVSLLAFTAMALLAFFEFFV). Residues 55-318 (YRDTWMKYEY…PFWQFLVRLC (264 aa)) lie on the Lumenal side of the membrane. Residues 319-339 (GIIGGIFSTTGMLHNLVGFCV) traverse the membrane as a helical segment. Over 340–376 (DVVCCRFKLGVYKPKSMSDFDGQINSLTPLLSENAEQ) the chain is Cytoplasmic.

Belongs to the ERGIC family.

Its subcellular location is the endoplasmic reticulum-Golgi intermediate compartment membrane. It localises to the golgi apparatus. The protein localises to the cis-Golgi network membrane. The protein resides in the endoplasmic reticulum membrane. In terms of biological role, possible role in transport between endoplasmic reticulum and Golgi. The sequence is that of Endoplasmic reticulum-Golgi intermediate compartment protein 2 (ergic2) from Danio rerio (Zebrafish).